The sequence spans 310 residues: Tagatose-6-phosphate kinase (310 aa).

This sequence belongs to the carbohydrate kinase PfkB family. LacC subfamily.

The catalysed reaction is D-tagatofuranose 6-phosphate + ATP = D-tagatofuranose 1,6-bisphosphate + ADP + H(+). Its pathway is carbohydrate metabolism; D-tagatose 6-phosphate degradation; D-glyceraldehyde 3-phosphate and glycerone phosphate from D-tagatose 6-phosphate: step 1/2. This chain is Tagatose-6-phosphate kinase, found in Staphylococcus aureus (strain USA300 / TCH1516).